The chain runs to 169 residues: Putative tRNA (cytidine(34)-2'-O)-methyltransferase (169 aa).

Val-79, Gly-104, Ile-125, and Ser-134 together coordinate S-adenosyl-L-methionine.

This sequence belongs to the class IV-like SAM-binding methyltransferase superfamily. RNA methyltransferase TrmH family. TrmL subfamily.

The protein localises to the cytoplasm. The catalysed reaction is cytidine(34) in tRNA + S-adenosyl-L-methionine = 2'-O-methylcytidine(34) in tRNA + S-adenosyl-L-homocysteine + H(+). The enzyme catalyses 5-carboxymethylaminomethyluridine(34) in tRNA(Leu) + S-adenosyl-L-methionine = 5-carboxymethylaminomethyl-2'-O-methyluridine(34) in tRNA(Leu) + S-adenosyl-L-homocysteine + H(+). Could methylate the ribose at the nucleotide 34 wobble position in tRNA. The chain is Putative tRNA (cytidine(34)-2'-O)-methyltransferase from Lactococcus lactis subsp. cremoris (strain MG1363).